We begin with the raw amino-acid sequence, 339 residues long: Malate/(S)-sulfolactate dehydrogenase (339 aa).

Belongs to the LDH2/MDH2 oxidoreductase family. As to quaternary structure, homodimer.

The protein resides in the cytoplasm. The catalysed reaction is (S)-malate + NAD(+) = oxaloacetate + NADH + H(+). It carries out the reaction (S)-malate + NADP(+) = oxaloacetate + NADPH + H(+). The enzyme catalyses (2S)-3-sulfolactate + NAD(+) = 3-sulfopyruvate + NADH + H(+). Its function is as follows. Acts on oxaloacetate, sulfopyruvate but not on pyruvate. Has a higher selectivity for the coenzyme NADH than for NADPH. This Methanothermus fervidus (strain ATCC 43054 / DSM 2088 / JCM 10308 / V24 S) protein is Malate/(S)-sulfolactate dehydrogenase (mdh).